Here is an 849-residue protein sequence, read N- to C-terminus: Autoinducer 1 sensor kinase/phosphatase LuxN (849 aa).

7 helical membrane passes run 9–29 (IVYAKAITLLATVAVVMMWLF), 41–61 (VIFGTHHAAYIAYSVCIIAWI), 160–180 (SYFFIGLVSFVVLTLVNLVAM), 196–216 (IAGILVFMLSTAVIHLGMTYF), 220–242 (FSLTWLPPALSISEMLFVGYALL), 251–275 (YIAYLALSVLLVCAIFVLPLGAIFI), and 283–301 (WLIAIPICALIGITWQLLY). One can recognise a Histidine kinase domain in the interval 468 to 683 (SIAHEMRNPL…EFHLYFPVVP (216 aa)). His-471 is modified (phosphohistidine; by autocatalysis). The Response regulatory domain maps to 722 to 835 (TVLIVDDKEV…ALRHVLGNWL (114 aa)). Asp-771 bears the 4-aspartylphosphate mark.

The protein resides in the cell inner membrane. The enzyme catalyses ATP + protein L-histidine = ADP + protein N-phospho-L-histidine.. The phosphatase activity is constitutive and the kinase activity is regulated by the presence or absence of AI-1. At low cell density the kinase activity overrides the phosphatase activity. At low cell density, in the absence of AI-1 (autoinducer 1), LuxN has a kinase activity and autophosphorylates on His-471. The phosphoryl group is then transferred on Asp-771 of the response regulator domain. The phosphoryl group is transferred to LuxU, and ultimately to LuxO. At high cell density, in the presence of AI-1, the kinase activity is inactivated, and the response regulator domain has a phosphatase activity. LuxN phosphatase acts on itself. As LuxU could function to establish an equilibrium between the aspartyl-phosphate of LuxN and the aspartyl-phosphate of LuxO, LuxU transfers phosphate from LuxO to LuxN and finally phosphate is drained from the system. This Vibrio campbellii (strain ATCC BAA-1116) protein is Autoinducer 1 sensor kinase/phosphatase LuxN (luxN).